The chain runs to 404 residues: MLLEQLKQAAEQRHALALTRRRRIAHTACAPHQAVGEEGTESESLLTFCSNDYLGLANHPQVIAALVEGAQRYGAGSGASHLVSGHSLAHAQLEAELARWFAPHIAQARTLYFCTGYMANMAVLTALGAAGATLFCESLNHASLIDGARLARADVQRYPHCDTDALQALLAASTSARKLIVTDSVFSMDGNVAPLRRLLELAERHDAWIVVDDAHGFGVLGEQGHGVLEALGLSSERLIYIGTLGKAAGVAGAFVAAHATIIEHLVNTARPYIYTTAAPPAVAHALLASLAIIEGDEGRQRRAQLARCIATLREGLAQLAASAGWTLGDSQTAVQPLIVGDNGAALALSAALEADGIRVGAIRPPTVPEGTARLRITLSAAHTEADVRRLLEALSAAVAQREAA.

A substrate-binding site is contributed by Arg20. Residue 116–117 (GY) participates in pyridoxal 5'-phosphate binding. His141 is a binding site for substrate. Pyridoxal 5'-phosphate is bound by residues Ser187, His215, and Thr243. The residue at position 246 (Lys246) is an N6-(pyridoxal phosphate)lysine. Thr366 provides a ligand contact to substrate.

Belongs to the class-II pyridoxal-phosphate-dependent aminotransferase family. BioF subfamily. As to quaternary structure, homodimer. The cofactor is pyridoxal 5'-phosphate.

The enzyme catalyses 6-carboxyhexanoyl-[ACP] + L-alanine + H(+) = (8S)-8-amino-7-oxononanoate + holo-[ACP] + CO2. The protein operates within cofactor biosynthesis; biotin biosynthesis. Functionally, catalyzes the decarboxylative condensation of pimeloyl-[acyl-carrier protein] and L-alanine to produce 8-amino-7-oxononanoate (AON), [acyl-carrier protein], and carbon dioxide. This Cupriavidus taiwanensis (strain DSM 17343 / BCRC 17206 / CCUG 44338 / CIP 107171 / LMG 19424 / R1) (Ralstonia taiwanensis (strain LMG 19424)) protein is 8-amino-7-oxononanoate synthase.